Consider the following 160-residue polypeptide: 2-C-methyl-D-erythritol 2,4-cyclodiphosphate synthase (160 aa).

Asp-9 and His-11 together coordinate a divalent metal cation. Residues 9 to 11 (DVH) and 35 to 36 (HS) each bind 4-CDP-2-C-methyl-D-erythritol 2-phosphate. His-43 is an a divalent metal cation binding site. 4-CDP-2-C-methyl-D-erythritol 2-phosphate contacts are provided by residues 57–59 (DIG), 62–66 (FPDND), and Phe-140.

This sequence belongs to the IspF family. Homotrimer. Requires a divalent metal cation as cofactor.

It carries out the reaction 4-CDP-2-C-methyl-D-erythritol 2-phosphate = 2-C-methyl-D-erythritol 2,4-cyclic diphosphate + CMP. It participates in isoprenoid biosynthesis; isopentenyl diphosphate biosynthesis via DXP pathway; isopentenyl diphosphate from 1-deoxy-D-xylulose 5-phosphate: step 4/6. Functionally, involved in the biosynthesis of isopentenyl diphosphate (IPP) and dimethylallyl diphosphate (DMAPP), two major building blocks of isoprenoid compounds. Catalyzes the conversion of 4-diphosphocytidyl-2-C-methyl-D-erythritol 2-phosphate (CDP-ME2P) to 2-C-methyl-D-erythritol 2,4-cyclodiphosphate (ME-CPP) with a corresponding release of cytidine 5-monophosphate (CMP). This chain is 2-C-methyl-D-erythritol 2,4-cyclodiphosphate synthase, found in Fusobacterium nucleatum subsp. nucleatum (strain ATCC 25586 / DSM 15643 / BCRC 10681 / CIP 101130 / JCM 8532 / KCTC 2640 / LMG 13131 / VPI 4355).